Reading from the N-terminus, the 148-residue chain is MFQGETAITLDDKGRMVVPAVYRDLIARMSANRLVLTYNPFEAGCLWLYVEKEWERVRDELMVKPNAHRVVRVLQQKLVGSSALLELDANGRISVPSSHRSAVAIGKKAVLLGMGDKFELWSEQAHHALIQQTLSDGDLGDGLLDLRL.

2 SpoVT-AbrB domains span residues 5–53 (ETAI…VEKE) and 82–125 (SALL…SEQA).

It belongs to the MraZ family. As to quaternary structure, forms oligomers.

The protein resides in the cytoplasm. The protein localises to the nucleoid. In Xylella fastidiosa (strain 9a5c), this protein is Transcriptional regulator MraZ.